Here is a 459-residue protein sequence, read N- to C-terminus: Putrescine aminotransferase (459 aa).

Residues 150 to 151 (GT) and Q274 each bind pyridoxal 5'-phosphate. N6-(pyridoxal phosphate)lysine is present on K300. T332 is a pyridoxal 5'-phosphate binding site.

The protein belongs to the class-III pyridoxal-phosphate-dependent aminotransferase family. Putrescine aminotransferase subfamily. It depends on pyridoxal 5'-phosphate as a cofactor.

The catalysed reaction is an alkane-alpha,omega-diamine + 2-oxoglutarate = an omega-aminoaldehyde + L-glutamate. It carries out the reaction putrescine + 2-oxoglutarate = 1-pyrroline + L-glutamate + H2O. It catalyses the reaction cadaverine + 2-oxoglutarate = 5-aminopentanal + L-glutamate. It functions in the pathway amine and polyamine degradation; putrescine degradation; 4-aminobutanal from putrescine (transaminase route): step 1/1. Functionally, catalyzes the aminotransferase reaction from putrescine to 2-oxoglutarate, leading to glutamate and 4-aminobutanal, which spontaneously cyclizes to form 1-pyrroline. This is the first step in one of two pathways for putrescine degradation, where putrescine is converted into 4-aminobutanoate (gamma-aminobutyrate or GABA) via 4-aminobutanal. Also functions as a cadaverine transaminase in a a L-lysine degradation pathway to succinate that proceeds via cadaverine, glutarate and L-2-hydroxyglutarate. This Salmonella paratyphi A (strain ATCC 9150 / SARB42) protein is Putrescine aminotransferase.